The following is a 1373-amino-acid chain: DNA-directed RNA polymerase subunit beta (1373 aa).

It belongs to the RNA polymerase beta chain family. The RNAP catalytic core consists of 2 alpha, 1 beta, 1 beta' and 1 omega subunit. When a sigma factor is associated with the core the holoenzyme is formed, which can initiate transcription.

The enzyme catalyses RNA(n) + a ribonucleoside 5'-triphosphate = RNA(n+1) + diphosphate. Functionally, DNA-dependent RNA polymerase catalyzes the transcription of DNA into RNA using the four ribonucleoside triphosphates as substrates. The sequence is that of DNA-directed RNA polymerase subunit beta from Rickettsia massiliae.